The chain runs to 181 residues: Oligoribonuclease (181 aa).

Positions 8–171 (LIWLDLEMTG…DDIKESIAEL (164 aa)) constitute an Exonuclease domain. Tyr129 is a catalytic residue.

It belongs to the oligoribonuclease family.

It is found in the cytoplasm. Its function is as follows. 3'-to-5' exoribonuclease specific for small oligoribonucleotides. The protein is Oligoribonuclease of Colwellia psychrerythraea (strain 34H / ATCC BAA-681) (Vibrio psychroerythus).